Here is a 357-residue protein sequence, read N- to C-terminus: Red-sensitive opsin (357 aa).

Residues 1 to 49 (MAEQWGKQVFAARRQNEDTTRGSAFTYTNSNHTRDPFEGPNYHIAPRWV) are Extracellular-facing. N-linked (GlcNAc...) asparagine glycosylation occurs at N31. Residues 50-74 (YNLATLWMFFVVVLSVFTNGLVLVA) form a helical membrane-spanning segment. The Cytoplasmic portion of the chain corresponds to 75–86 (TAKFKKLRHPLN). The chain crosses the membrane as a helical span at residues 87 to 112 (WILSNLAIADLGETVFASTISVCNQF). At 113 to 126 (FGYFILGHPMCVFE) the chain is on the extracellular side. A disulfide bridge links C123 with C200. The chain crosses the membrane as a helical span at residues 127 to 146 (GYVVSTCGIAALWSLTIISW). The Cytoplasmic segment spans residues 147–165 (ERWVVVCKPFGNVKFDAKW). The helical transmembrane segment at 166–189 (AIGGIVFSWVWSAVWCAPPVFGWS) threads the bilayer. At 190 to 215 (RYWPHGLKTSCGPDVFSGSDDPGVQS) the chain is on the extracellular side. Residues 216 to 243 (YMIVLMITCCIIPLAIIILCYLAVWLAI) form a helical membrane-spanning segment. Over 244–265 (RAVAMQQKESESTQKAEREVSR) the chain is Cytoplasmic. The chain crosses the membrane as a helical span at residues 266-289 (MVVVMIVAYCVCWGPYTFFACFAA). Residues 290-297 (ANPGYAFH) are Extracellular-facing. Residues 298–322 (PLAAAMPAYFAKSATIYNPVIYVFM) traverse the membrane as a helical segment. N6-(retinylidene)lysine is present on K309. Residues 323-357 (NRQFRTCIMQLFGKQVDDGSEVSTSKTEVSSVAPA) lie on the Cytoplasmic side of the membrane.

This sequence belongs to the G-protein coupled receptor 1 family. Opsin subfamily. Post-translationally, phosphorylated on some or all of the serine and threonine residues present in the C-terminal region. The color pigments are found in the cone photoreceptor cells.

Its subcellular location is the membrane. Functionally, visual pigments are the light-absorbing molecules that mediate vision. They consist of an apoprotein, opsin, covalently linked to cis-retinal. The protein is Red-sensitive opsin of Oryzias latipes (Japanese rice fish).